The primary structure comprises 178 residues: ATP-dependent protease subunit HslV (178 aa).

T7 is an active-site residue. G162, C165, and T168 together coordinate Na(+).

The protein belongs to the peptidase T1B family. HslV subfamily. A double ring-shaped homohexamer of HslV is capped on each side by a ring-shaped HslU homohexamer. The assembly of the HslU/HslV complex is dependent on binding of ATP.

Its subcellular location is the cytoplasm. It catalyses the reaction ATP-dependent cleavage of peptide bonds with broad specificity.. Allosterically activated by HslU binding. Protease subunit of a proteasome-like degradation complex believed to be a general protein degrading machinery. This is ATP-dependent protease subunit HslV from Cupriavidus taiwanensis (strain DSM 17343 / BCRC 17206 / CCUG 44338 / CIP 107171 / LMG 19424 / R1) (Ralstonia taiwanensis (strain LMG 19424)).